The chain runs to 200 residues: Mediator of RNA polymerase II transcription subunit 8 (200 aa).

This sequence belongs to the Mediator complex subunit 8 family. As to quaternary structure, component of the Mediator complex.

Its subcellular location is the nucleus. Functionally, component of the Mediator complex, a coactivator involved in the regulated transcription of nearly all RNA polymerase II-dependent genes. Mediator functions as a bridge to convey information from gene-specific regulatory proteins to the basal RNA polymerase II transcription machinery. Mediator is recruited to promoters by direct interactions with regulatory proteins and serves as a scaffold for the assembly of a functional preinitiation complex with RNA polymerase II and the general transcription factors. The protein is Mediator of RNA polymerase II transcription subunit 8 (med8) of Schizosaccharomyces pombe (strain 972 / ATCC 24843) (Fission yeast).